A 219-amino-acid chain; its full sequence is Ribose-5-phosphate isomerase A (219 aa).

Residues 28 to 31 (SGST), 81 to 84 (DGAD), and 94 to 97 (KGGG) each bind substrate. The active-site Proton acceptor is the glutamate 103. A substrate-binding site is contributed by lysine 121.

It belongs to the ribose 5-phosphate isomerase family. Homodimer.

The enzyme catalyses aldehydo-D-ribose 5-phosphate = D-ribulose 5-phosphate. Its pathway is carbohydrate degradation; pentose phosphate pathway; D-ribose 5-phosphate from D-ribulose 5-phosphate (non-oxidative stage): step 1/1. In terms of biological role, catalyzes the reversible conversion of ribose-5-phosphate to ribulose 5-phosphate. The polypeptide is Ribose-5-phosphate isomerase A (Histophilus somni (strain 129Pt) (Haemophilus somnus)).